The sequence spans 200 residues: Phospholipase A2 inhibitor LNF2 (200 aa).

The first 19 residues, 1–19 (MKSLHTICLLFIFVARGNS), serve as a signal peptide directing secretion. Disulfide bonds link cysteine 22/cysteine 46, cysteine 25/cysteine 32, cysteine 39/cysteine 67, cysteine 73/cysteine 94, cysteine 95/cysteine 100, cysteine 118/cysteine 143, cysteine 136/cysteine 165, and cysteine 169/cysteine 191. An N-linked (GlcNAc...) asparagine glycan is attached at asparagine 176.

The protein belongs to the CNF-like-inhibitor family. In terms of assembly, occurs as a mixture of oligomers. Tetrameric arrangement appears to be the predominant quaternary structure. In terms of tissue distribution, expressed by the liver.

It is found in the secreted. In terms of biological role, inhibits the enzymatic activity of phospholipase A2 (PA2). This chain is Phospholipase A2 inhibitor LNF2, found in Lachesis muta muta (Bushmaster).